The primary structure comprises 1134 residues: Spermatogenesis-associated protein 31C2 (1134 aa).

Residues 23-43 traverse the membrane as a helical segment; it reads PWVLDIFLTLVFALGFFFLLL. Disordered regions lie at residues 54–87, 115–243, 477–504, 524–561, 727–807, 928–1007, and 1111–1134; these read PPSPSPKKRKRHLVSQRPAGRRGRPRGRMKNHSL, LEKG…LLTP, PGTSQAKGKPRPWQSSTSTGESSKEAQT, TPQNLSRGMESFPGKVLGATSEESERNLRKPLRSDSGS, MPER…PTVP, NMGH…PSIS, and AASSQQATLKNQSRPNRDRQIRDQ. The segment covering 59-87 has biased composition (basic residues); that stretch reads PKKRKRHLVSQRPAGRRGRPRGRMKNHSL. The span at 132 to 148 shows a compositional bias: basic and acidic residues; that stretch reads VGKRTPDGASRSSHEPT. Residues 185–201 are compositionally biased toward low complexity; it reads SSLSASQPPEPSLLLEH. Residues 204–235 show a composition bias toward pro residues; the sequence is PEPPALFPHPPRTPDPLACSPPPPKGFTPPPL. Residues 489 to 504 are compositionally biased toward polar residues; sequence WQSSTSTGESSKEAQT. Polar residues-rich tracts occupy residues 773–794 and 937–948; these read LTYSLTGSTQQSRSLGAQSSRA and PNCQGSCKSQSP. Over residues 954–970 the composition is skewed to basic and acidic residues; it reads HKRENSRKPNLEKHEEM. Polar residues predominate over residues 1111 to 1124; that stretch reads AASSQQATLKNQSR. Residues 1125–1134 are compositionally biased toward basic and acidic residues; the sequence is PNRDRQIRDQ.

The protein belongs to the SPATA31 family.

The protein resides in the membrane. In terms of biological role, may play a role in spermatogenesis. The sequence is that of Spermatogenesis-associated protein 31C2 (SPATA31C2) from Homo sapiens (Human).